A 775-amino-acid polypeptide reads, in one-letter code: Mitochondrial intermediate peptidase (775 aa).

The transit peptide at 1–28 (MIARPARDVLSSATKKQFRFRGCLAARH) directs the protein to the mitochondrion. Zn(2+) is bound at residue H558. E559 is a catalytic residue. 2 residues coordinate Zn(2+): H562 and H565.

It belongs to the peptidase M3 family. Zn(2+) serves as cofactor.

Its subcellular location is the mitochondrion matrix. It carries out the reaction Release of an N-terminal octapeptide as second stage of processing of some proteins imported into the mitochondrion.. Functionally, cleaves proteins, imported into the mitochondrion, to their mature size. While most mitochondrial precursor proteins are processed to the mature form in one step by mitochondrial processing peptidase (MPP), the sequential cleavage by MIP of an octapeptide after initial processing by MPP is a required step for a subgroup of nuclear-encoded precursor proteins destined for the matrix or the inner membrane. The chain is Mitochondrial intermediate peptidase (OCT1) from Schizophyllum commune (Split gill fungus).